The chain runs to 464 residues: Cysteine--tRNA ligase (464 aa).

A Zn(2+)-binding site is contributed by cysteine 28. The 'HIGH' region motif lies at 30 to 40 (PTVYDTAHIGN). Residues cysteine 212, histidine 237, and glutamate 241 each contribute to the Zn(2+) site. The 'KMSKS' region motif lies at 270–274 (KMSKS). An ATP-binding site is contributed by lysine 273.

This sequence belongs to the class-I aminoacyl-tRNA synthetase family. As to quaternary structure, monomer. The cofactor is Zn(2+).

It is found in the cytoplasm. It catalyses the reaction tRNA(Cys) + L-cysteine + ATP = L-cysteinyl-tRNA(Cys) + AMP + diphosphate. The chain is Cysteine--tRNA ligase from Wolbachia pipientis subsp. Culex pipiens (strain wPip).